Reading from the N-terminus, the 328-residue chain is Stress response kinase A (328 aa).

Asp201 functions as the Proton acceptor in the catalytic mechanism. Residues Asn206 and Asp217 each contribute to the Mg(2+) site. Residue Asp217 is part of the active site.

This sequence belongs to the SrkA/RdoA protein kinase family. As to quaternary structure, monomer. It depends on Mg(2+) as a cofactor.

It localises to the cytoplasm. It catalyses the reaction L-seryl-[protein] + ATP = O-phospho-L-seryl-[protein] + ADP + H(+). The catalysed reaction is L-threonyl-[protein] + ATP = O-phospho-L-threonyl-[protein] + ADP + H(+). In terms of biological role, a protein kinase that phosphorylates Ser and Thr residues. Probably acts to suppress the effects of stress linked to accumulation of reactive oxygen species. Probably involved in the extracytoplasmic stress response. Also has a role in LPS synthesis, through regulation of the galETK expression. Functionally, a protein kinase that phosphorylates Ser and Thr residues. Probably acts to suppress the effects of stress linked to accumulation of reactive oxygen species. Probably involved in the extracytoplasmic stress response. This chain is Stress response kinase A, found in Shigella flexneri.